A 270-amino-acid polypeptide reads, in one-letter code: Interleukin-1 alpha (270 aa).

Residues 1-114 (MAKVPDLFED…HDLEETIQPR (114 aa)) constitute a propeptide that is removed on maturation. Asn-46 is a glycosylation site (N-linked (GlcNAc...) asparagine). The residue at position 85 (Lys-85) is an N6-acetyllysine. A nuclear localization signal (NLS) region spans residues 85–89 (KKRRL). Ser-90 bears the Phosphoserine mark. Asn-139 carries an N-linked (GlcNAc...) asparagine glycan.

This sequence belongs to the IL-1 family. In terms of assembly, monomer. Interacts with TMED10; the interaction mediates the translocation from the cytoplasm into the ERGIC (endoplasmic reticulum-Golgi intermediate compartment) and thereby secretion. Interacts with IL1R1. Interacts with S100A13; this interaction is the first step in the export of IL1A, followed by direct translocation of this complex across the plasma membrane. Acetylated within its nuclear localization sequence, which impacts subcellular localization. In terms of processing, proteolytic processed by CAPN1 in a calcium-dependent manner. Cleavage from 31 kDa precursor to 18 kDa biologically active molecules. Post-translationally, phosphorylated. Phosphorylation greatly enhances susceptibility to digestion and promotes the conversion of pre-IL1A alpha to the biologically active IL1A.

The protein resides in the nucleus. It is found in the cytoplasm. It localises to the secreted. Its function is as follows. Cytokine constitutively present intracellularly in nearly all resting non-hematopoietic cells that plays an important role in inflammation and bridges the innate and adaptive immune systems. After binding to its receptor IL1R1 together with its accessory protein IL1RAP, forms the high affinity interleukin-1 receptor complex. Signaling involves the recruitment of adapter molecules such as MYD88, IRAK1 or IRAK4. In turn, mediates the activation of NF-kappa-B and the three MAPK pathways p38, p42/p44 and JNK pathways. Within the cell, acts as an alarmin and cell death results in its liberation in the extracellular space after disruption of the cell membrane to induce inflammation and alert the host to injury or damage. In addition to its role as a danger signal, which occurs when the cytokine is passively released by cell necrosis, directly senses DNA damage and acts as signal for genotoxic stress without loss of cell integrity. The chain is Interleukin-1 alpha from Rattus norvegicus (Rat).